The following is a 351-amino-acid chain: Nicotinate-nucleotide--dimethylbenzimidazole phosphoribosyltransferase (351 aa).

Catalysis depends on Glu-317, which acts as the Proton acceptor.

Belongs to the CobT family.

It catalyses the reaction 5,6-dimethylbenzimidazole + nicotinate beta-D-ribonucleotide = alpha-ribazole 5'-phosphate + nicotinate + H(+). Its pathway is nucleoside biosynthesis; alpha-ribazole biosynthesis; alpha-ribazole from 5,6-dimethylbenzimidazole: step 1/2. Catalyzes the synthesis of alpha-ribazole-5'-phosphate from nicotinate mononucleotide (NAMN) and 5,6-dimethylbenzimidazole (DMB). This chain is Nicotinate-nucleotide--dimethylbenzimidazole phosphoribosyltransferase, found in Ectopseudomonas mendocina (strain ymp) (Pseudomonas mendocina).